The following is a 407-amino-acid chain: Arginine deiminase (407 aa).

The active-site Amidino-cysteine intermediate is Cys-397.

This sequence belongs to the arginine deiminase family.

Its subcellular location is the cytoplasm. The enzyme catalyses L-arginine + H2O = L-citrulline + NH4(+). The protein operates within amino-acid degradation; L-arginine degradation via ADI pathway; carbamoyl phosphate from L-arginine: step 1/2. In Salmonella choleraesuis (strain SC-B67), this protein is Arginine deiminase.